Reading from the N-terminus, the 765-residue chain is Zinc finger and BTB domain-containing protein 49 (765 aa).

Positions 25 to 91 constitute a BTB domain; sequence CDCMLVVKGV…MYTSHLDLNQ (67 aa). Disordered regions lie at residues 165–203 and 275–294; these read QQNK…GSCT and NFLA…DATC. 7 consecutive C2H2-type zinc fingers follow at residues 395 to 417, 423 to 445, 451 to 473, 479 to 501, 507 to 529, 535 to 557, and 563 to 585; these read YACE…KRSH, FECN…LRRH, YICE…IIIH, HLCD…KKTH, FTCD…RIRH, YSCS…VRTH, and YTCE…KKMH.

This sequence belongs to the krueppel C2H2-type zinc-finger protein family. In terms of assembly, isoform 1 interacts with EP300 and KAT5/Tip60. The interaction with EP300 is direct and leads to synergistic induction of CDKN1A. On the CDKN1A promoter, forms a complex with ZBTB17/Miz-1; this interaction leads to additive CDKN1A transactivation. Isoform 3 also interacts with ZBTB17; this interaction may block ZBTB17 repressor activity. Highly expressed in normal epidermis and in other epithelial tissues, including in colon and lung. Tends to be down-regulated in colon, lung and skin cancer tissues.

The protein resides in the cytoplasm. It is found in the nucleus. In terms of biological role, transcription factor. Inhibits cell proliferation by activating either CDKN1A/p21 transcription or RB1 transcription. Binds CDKN1A promoter and activates its transcription; this activity is further potentiated in the presence of EP300 (synergistic) and ZBTB17/Miz-1 (additive). Its function is as follows. Activates RB1 transcription most probably by antagonizing ZBTB17 repression of RB1. Does not bind directly RB1 promoter. The protein is Zinc finger and BTB domain-containing protein 49 (ZBTB49) of Homo sapiens (Human).